Reading from the N-terminus, the 327-residue chain is Alkene monooxygenase system, ferredoxin--NAD(+) reductase component (327 aa).

Residues 1 to 89 (MRLNDGRSFS…DLEINVRAGD (89 aa)) form the 2Fe-2S ferredoxin-type domain. Cysteine 32, cysteine 37, cysteine 40, and cysteine 73 together coordinate [2Fe-2S] cluster. One can recognise an FAD-binding FR-type domain in the interval 96 to 194 (PRRHAARVTV…EGPYGRAYLR (99 aa)).

This sequence belongs to the bacterial ring-hydroxylating dioxygenase ferredoxin reductase family. In terms of assembly, monomer. The alkene monooxygenase multicomponent enzyme system is composed of an electron transfer component and a monooxygenase component interacting with the effector protein XamoD. The electron transfer component is composed of a ferredoxin reductase (XamoF) and a ferredoxin (XamoC), and the monooxygenase component is formed by a heterohexamer (dimer of heterotrimers) of two alpha subunits (XamoA), two beta subunits (XamoE) and two gamma subunits (XamoB). Requires FAD as cofactor. It depends on [2Fe-2S] cluster as a cofactor.

It localises to the cytoplasm. It catalyses the reaction 2 reduced [2Fe-2S]-[ferredoxin] + NAD(+) + H(+) = 2 oxidized [2Fe-2S]-[ferredoxin] + NADH. In terms of biological role, reductase component of the alkene monooxygenase multicomponent enzyme system which catalyzes the O2- and NADH-dependent epoxidation of short chain (C2 to C6) alkenes to their corresponding epoxides. Ferredoxin reductase catalyzes the transfer of electrons from NADH to ferredoxin (XamoC). NADPH is also effective but with a rate approximately 3-fold lower than with NADH. In Xanthobacter autotrophicus (strain ATCC BAA-1158 / Py2), this protein is Alkene monooxygenase system, ferredoxin--NAD(+) reductase component.